Consider the following 103-residue polypeptide: MERIRLKLKAYDHRVLDRTVAAIVEAVKRTGADIRGPIPMPTKIKRYTVLKSPHINKDSREQFEIRIHARMLDIVAATPDTVDSLTKLDLAPEVSVEVRAMGK.

Belongs to the universal ribosomal protein uS10 family. As to quaternary structure, part of the 30S ribosomal subunit.

Involved in the binding of tRNA to the ribosomes. This chain is Small ribosomal subunit protein uS10, found in Campylobacter jejuni subsp. jejuni serotype O:6 (strain 81116 / NCTC 11828).